Here is a 66-residue protein sequence, read N- to C-terminus: Large ribosomal subunit protein bL35 (66 aa).

Basic residues predominate over residues 1–16; the sequence is MPKQKTHRASAKRFKR. A disordered region spans residues 1–21; the sequence is MPKQKTHRASAKRFKRTGSGG.

Belongs to the bacterial ribosomal protein bL35 family.

This chain is Large ribosomal subunit protein bL35, found in Streptococcus sanguinis (strain SK36).